Here is a 276-residue protein sequence, read N- to C-terminus: Ribosomal RNA small subunit methyltransferase A (276 aa).

The S-adenosyl-L-methionine site is built by asparagine 27, leucine 29, glycine 54, glutamate 75, aspartate 101, and asparagine 122.

Belongs to the class I-like SAM-binding methyltransferase superfamily. rRNA adenine N(6)-methyltransferase family. RsmA subfamily.

The protein resides in the cytoplasm. It carries out the reaction adenosine(1518)/adenosine(1519) in 16S rRNA + 4 S-adenosyl-L-methionine = N(6)-dimethyladenosine(1518)/N(6)-dimethyladenosine(1519) in 16S rRNA + 4 S-adenosyl-L-homocysteine + 4 H(+). In terms of biological role, specifically dimethylates two adjacent adenosines (A1518 and A1519) in the loop of a conserved hairpin near the 3'-end of 16S rRNA in the 30S particle. May play a critical role in biogenesis of 30S subunits. The chain is Ribosomal RNA small subunit methyltransferase A from Brucella melitensis biotype 1 (strain ATCC 23456 / CCUG 17765 / NCTC 10094 / 16M).